We begin with the raw amino-acid sequence, 114 residues long: Fluoride-specific ion channel FluC 1 (114 aa).

3 helical membrane-spanning segments follow: residues 28–48, 56–76, and 91–111; these read VFPWATFIINITGALLLGFLH, ILLLLGTGFLGGYTTFSTFQV, and IIYLLLTVICGILAAYCGSWL. 2 residues coordinate Na(+): G66 and T69.

The protein belongs to the fluoride channel Fluc/FEX (TC 1.A.43) family.

The protein resides in the cell membrane. The enzyme catalyses fluoride(in) = fluoride(out). Na(+) is not transported, but it plays an essential structural role and its presence is essential for fluoride channel function. In terms of biological role, fluoride-specific ion channel. Important for reducing fluoride concentration in the cell, thus reducing its toxicity. This chain is Fluoride-specific ion channel FluC 1, found in Ligilactobacillus salivarius (strain UCC118) (Lactobacillus salivarius).